We begin with the raw amino-acid sequence, 75 residues long: Small ribosomal subunit protein bS16 (75 aa).

This sequence belongs to the bacterial ribosomal protein bS16 family.

This is Small ribosomal subunit protein bS16 from Campylobacter lari (strain RM2100 / D67 / ATCC BAA-1060).